The following is a 307-amino-acid chain: Aspartate carbamoyltransferase catalytic subunit (307 aa).

2 residues coordinate carbamoyl phosphate: R56 and T57. K84 is a binding site for L-aspartate. Residues R106, H136, and Q139 each contribute to the carbamoyl phosphate site. Positions 169 and 221 each coordinate L-aspartate. Positions 262 and 263 each coordinate carbamoyl phosphate.

The protein belongs to the aspartate/ornithine carbamoyltransferase superfamily. ATCase family. As to quaternary structure, heterododecamer (2C3:3R2) of six catalytic PyrB chains organized as two trimers (C3), and six regulatory PyrI chains organized as three dimers (R2).

It catalyses the reaction carbamoyl phosphate + L-aspartate = N-carbamoyl-L-aspartate + phosphate + H(+). Its pathway is pyrimidine metabolism; UMP biosynthesis via de novo pathway; (S)-dihydroorotate from bicarbonate: step 2/3. In terms of biological role, catalyzes the condensation of carbamoyl phosphate and aspartate to form carbamoyl aspartate and inorganic phosphate, the committed step in the de novo pyrimidine nucleotide biosynthesis pathway. The chain is Aspartate carbamoyltransferase catalytic subunit from Streptococcus pneumoniae (strain JJA).